A 321-amino-acid polypeptide reads, in one-letter code: Methionyl-tRNA formyltransferase (321 aa).

113 to 116 is a binding site for (6S)-5,6,7,8-tetrahydrofolate; the sequence is SILP.

This sequence belongs to the Fmt family.

It catalyses the reaction L-methionyl-tRNA(fMet) + (6R)-10-formyltetrahydrofolate = N-formyl-L-methionyl-tRNA(fMet) + (6S)-5,6,7,8-tetrahydrofolate + H(+). Its function is as follows. Attaches a formyl group to the free amino group of methionyl-tRNA(fMet). The formyl group appears to play a dual role in the initiator identity of N-formylmethionyl-tRNA by promoting its recognition by IF2 and preventing the misappropriation of this tRNA by the elongation apparatus. In Vibrio atlanticus (strain LGP32) (Vibrio splendidus (strain Mel32)), this protein is Methionyl-tRNA formyltransferase.